We begin with the raw amino-acid sequence, 428 residues long: Spliceosome RNA helicase Ddx39b (428 aa).

Over residues 1-19 (MAENDVDNELLDYEDDEVE) the composition is skewed to acidic residues. The segment at 1-31 (MAENDVDNELLDYEDDEVETAAGADGTEAPA) is disordered. A2 is modified (N-acetylalanine). At K36 the chain carries N6-acetyllysine; alternate. K36 is covalently cross-linked (Glycyl lysine isopeptide (Lys-Gly) (interchain with G-Cter in SUMO2); alternate). Residues S38 and S41 each carry the phosphoserine modification. A Q motif motif is present at residues 45–73 (SGFRDFLLKPELLRAIVDCGFEHPSEVQH). One can recognise a Helicase ATP-binding domain in the interval 76-249 (IPQAILGMDV…RKFMQDPMEI (174 aa)). 89–96 (AKSGMGKT) is a binding site for ATP. T172 is modified (phosphothreonine). The DECD box motif lies at 196–199 (DECD). The region spanning 261–422 (GLQQYYVKLK…ELPDEIDISS (162 aa)) is the Helicase C-terminal domain.

This sequence belongs to the DEAD box helicase family. DECD subfamily. In terms of assembly, homodimer, and heterodimer with DDX39A. DDX39B interacts with the THO subcomplex to form the THO-DDX39B complex which multimerizes into a 28-subunit tetrameric assembly. Component of the transcription/export (TREX) complex at least composed of ALYREF/THOC4, DDX39B, SARNP/CIP29, CHTOP and the THO subcomplex; in the complex interacts with THOC2. THOC1-THOC2-THOC3-DDX39B subcomplex is sufficient for the interaction with export factor NXF1-NXT1. TREX seems to have a dynamic structure involving ATP-dependent remodeling. Within the TREX complex bridges ALYREF/THOC4 and the THO subcomplex, and, in a ATP-dependent manner, ALYREF/THOC4 and SARNP/CIP29. Component of the spliceosome. Interacts directly with U2AF2. Interacts with RBM8A, RNPS1 and SRRM1, FYTTD1/UIF, THOC1, MX1 and POLDIP3. Interacts with LUZP4. Interacts with SARNP/CIP29 (via the C-terminal domain); the interaction is direct and facilitates RNA binding of DDX39B.

It is found in the nucleus. Its subcellular location is the nucleus speckle. The protein localises to the cytoplasm. The enzyme catalyses ATP + H2O = ADP + phosphate + H(+). In terms of biological role, involved in nuclear export of spliced and unspliced mRNA. Component of the TREX complex which is thought to couple mRNA transcription, processing and nuclear export, and specifically associates with spliced mRNA and not with unspliced pre-mRNA. The TREX complex is recruited to spliced mRNAs by a transcription-independent mechanism, binds to mRNA upstream of the exon-junction complex (EJC) and is recruited in a splicing- and cap-dependent manner to a region near the 5' end of the mRNA where it functions in mRNA export to the cytoplasm via the TAP/NXF1 pathway. The THOC1-THOC2-THOC3 core complex alone is sufficient to promote ATPase activity of DDX39B; in the complex THOC2 is the only component that directly interacts with DDX39B. Associates with SARNP/CIP29, which facilitates RNA binding of DDX39B and likely plays a role in mRNA export. May undergo several rounds of ATP hydrolysis during assembly of TREX to drive subsequent loading of components such as ALYREF/THOC4 and CHTOP onto mRNA. Also associates with pre-mRNA independent of ALYREF/THOC4. Involved in the nuclear export of intronless mRNA; the ATP-bound form is proposed to recruit export adapter ALYREF/THOC4 to intronless mRNA; its ATPase activity is cooperatively stimulated by RNA and ALYREF/THOC4 and ATP hydrolysis is thought to trigger the dissociation from RNA to allow the association of ALYREF/THOC4 and the NXF1-NXT1 heterodimer. Involved in transcription elongation and genome stability. Splice factor that is required for the first ATP-dependent step in spliceosome assembly and for the interaction of U2 snRNP with the branchpoint. Has both RNA-stimulated ATP binding/hydrolysis activity and ATP-dependent RNA unwinding activity. Even with the stimulation of RNA, the ATPase activity is weak. Can only hydrolyze ATP but not other NTPs. The RNA stimulation of ATPase activity does not have a strong preference for the sequence and length of the RNA. However, ssRNA stimulates the ATPase activity much more strongly than dsRNA. Can unwind 5' or 3' overhangs or blunt end RNA duplexes in vitro. The ATPase and helicase activities are not influenced by U2AF2; the effect of ALYREF/THOC4 is reported conflictingly. In Mus musculus (Mouse), this protein is Spliceosome RNA helicase Ddx39b (Ddx39b).